The sequence spans 445 residues: Phospho-alpha-glucosidase PagL (445 aa).

4 to 71 (YSICIVGGGS…ELEEVIWTTD (68 aa)) is an NAD(+) binding site. Substrate contacts are provided by Arg94 and Asn148. Cys171 provides a ligand contact to Mn(2+). The active-site Proton donor is Asp172. Residue His201 coordinates Mn(2+). Tyr264 acts as the Proton acceptor in catalysis. A substrate-binding site is contributed by Arg284.

The protein belongs to the glycosyl hydrolase 4 family. Homotetramer. It depends on NAD(+) as a cofactor. Mn(2+) serves as cofactor.

In terms of biological role, phospho-alpha-glucosidase that catalyzes the hydrolysis of p-nitrophenyl-alpha-D-glucopyranoside 6-phosphate, but is not able to cleave 'natural' phospho-alpha-glucosides produced via the phosphoenolpyruvate-dependent sugar phosphotransferase system (PEP-PTS). This chain is Phospho-alpha-glucosidase PagL (pagL), found in Clostridium acetobutylicum (strain ATCC 824 / DSM 792 / JCM 1419 / IAM 19013 / LMG 5710 / NBRC 13948 / NRRL B-527 / VKM B-1787 / 2291 / W).